A 454-amino-acid chain; its full sequence is N-myc 2 proto-oncogene protein (454 aa).

Disordered regions lie at residues Ser-132–Thr-166, Val-230–Glu-269, and Pro-325–Arg-374. Residues Pro-151–Arg-161 are compositionally biased toward low complexity. Over residues Ala-256 to Glu-269 the composition is skewed to acidic residues. A compositionally biased stretch (basic and acidic residues) spans Arg-363–Arg-374. In terms of domain architecture, bHLH spans Val-371–Leu-423. Residues Leu-423–Leu-444 are leucine-zipper.

In terms of assembly, efficient DNA binding requires dimerization with another bHLH protein.

Its subcellular location is the nucleus. This Marmota monax (Woodchuck) protein is N-myc 2 proto-oncogene protein (N-MYC2).